We begin with the raw amino-acid sequence, 354 residues long: Probable L-ascorbate-6-phosphate lactonase UlaG (354 aa).

It belongs to the UlaG family. Requires a divalent metal cation as cofactor.

The protein resides in the cytoplasm. The catalysed reaction is L-ascorbate 6-phosphate + H2O = 3-dehydro-L-gulonate 6-phosphate. It participates in cofactor degradation; L-ascorbate degradation; D-xylulose 5-phosphate from L-ascorbate: step 1/4. Its function is as follows. Probably catalyzes the hydrolysis of L-ascorbate-6-P into 3-keto-L-gulonate-6-P. Is essential for L-ascorbate utilization under anaerobic conditions. The protein is Probable L-ascorbate-6-phosphate lactonase UlaG of Escherichia coli (strain SMS-3-5 / SECEC).